We begin with the raw amino-acid sequence, 60 residues long: Large ribosomal subunit protein bL32B (60 aa).

Over residues 1–19 the composition is skewed to basic residues; the sequence is MAVPKRKMSRANTRHRRSQ. A disordered region spans residues 1–20; sequence MAVPKRKMSRANTRHRRSQW.

Belongs to the bacterial ribosomal protein bL32 family.

The sequence is that of Large ribosomal subunit protein bL32B from Saccharopolyspora erythraea (strain ATCC 11635 / DSM 40517 / JCM 4748 / NBRC 13426 / NCIMB 8594 / NRRL 2338).